Consider the following 269-residue polypeptide: Hydroxypyruvate/pyruvate aldolase (269 aa).

Histidine 47 (proton acceptor) is an active-site residue. Glutamate 151 and aspartate 177 together coordinate a divalent metal cation.

Belongs to the HpcH/HpaI aldolase family. A divalent metal cation serves as cofactor.

The enzyme catalyses D-glyceraldehyde + 3-hydroxypyruvate = 2-dehydro-D-gluconate. It catalyses the reaction D-glyceraldehyde + 3-hydroxypyruvate = (3R,4S,5R)-3,4,5,6-tetrahydroxy-2-oxohexanoate. The catalysed reaction is D-glyceraldehyde + 3-hydroxypyruvate = 2-dehydro-D-galactonate. It carries out the reaction D-glyceraldehyde + pyruvate = 2-dehydro-3-deoxy-L-galactonate. The enzyme catalyses 2-dehydro-3-deoxy-D-gluconate = D-glyceraldehyde + pyruvate. Functionally, aldolase which can catalyze in vitro the aldolisation reaction between hydroxypyruvate (HPA) or pyruvate (PA) and D-glyceraldehyde (D-GA). The condensation of hydroxypyruvate and D-glyceraldehyde produces 2-dehydro-D-gluconate as the major product, (3R,4S,5R)-3,4,5,6-tetrahydroxy-2-oxohexanoate and 2-dehydro-D-galactonate. The condensation of pyruvate and D-glyceraldehyde produces 2-dehydro-3-deoxy-L-galactonate as the major product and 2-dehydro-3-deoxy-D-gluconate. The protein is Hydroxypyruvate/pyruvate aldolase of Cupriavidus necator (strain ATCC 17699 / DSM 428 / KCTC 22496 / NCIMB 10442 / H16 / Stanier 337) (Ralstonia eutropha).